The sequence spans 270 residues: MLWIEAVRTLSADLEDPFELEFVWRNLHELNKLSWLNLMREKITDQELKLLTEVSKRLHQNEPPQYIVGWAEFRDLKLKVDERVLIPRPETEELVEMILAENEKDSLKILDIGTGSGAIAISLAQARENWSVKASDISKEALTLAAENAEINQANLEFIQSDVLDKITDSFDIIVSNPPYIAFDETYEMDNSVIKYEPDLALFAENQGLAIYQKIADQAVNHLTDNGKIYLEIGYKQGQAVQAIFQEKFTDKLVSIHQDIFGKDRMISVK.

Residues 113–117, Asp-136, and Asn-177 each bind S-adenosyl-L-methionine; that span reads GTGSG. 177–180 is a binding site for substrate; that stretch reads NPPY.

Belongs to the protein N5-glutamine methyltransferase family. PrmC subfamily.

The catalysed reaction is L-glutaminyl-[peptide chain release factor] + S-adenosyl-L-methionine = N(5)-methyl-L-glutaminyl-[peptide chain release factor] + S-adenosyl-L-homocysteine + H(+). Functionally, methylates the class 1 translation termination release factors RF1/PrfA and RF2/PrfB on the glutamine residue of the universally conserved GGQ motif. The protein is Release factor glutamine methyltransferase of Lactococcus lactis subsp. lactis (strain IL1403) (Streptococcus lactis).